We begin with the raw amino-acid sequence, 505 residues long: RNA-splicing ligase RtcB homolog (505 aa).

5 residues coordinate Mn(2+): aspartate 119, cysteine 122, histidine 227, histidine 259, and histidine 353. Residue 226–230 coordinates GMP; the sequence is NHYAE. Residues 353 to 354, 402 to 405, serine 409, 428 to 431, and lysine 504 each bind GMP; these read HN, GGTM, and HGAG. The active-site GMP-histidine intermediate is the histidine 428.

The protein belongs to the RtcB family. In terms of assembly, catalytic component of the tRNA-splicing ligase complex. The cofactor is Mn(2+).

It localises to the nucleus. Its subcellular location is the cytoplasm. The enzyme catalyses a 3'-end 3'-phospho-ribonucleotide-RNA + a 5'-end dephospho-ribonucleoside-RNA + GTP = a ribonucleotidyl-ribonucleotide-RNA + GMP + diphosphate. It catalyses the reaction a 3'-end 2',3'-cyclophospho-ribonucleotide-RNA + a 5'-end dephospho-ribonucleoside-RNA + GTP + H2O = a ribonucleotidyl-ribonucleotide-RNA + GMP + diphosphate + H(+). In terms of biological role, catalytic subunit of the tRNA-splicing ligase complex that acts by directly joining spliced tRNA halves to mature-sized tRNAs by incorporating the precursor-derived splice junction phosphate into the mature tRNA as a canonical 3',5'-phosphodiester. May act as an RNA ligase with broad substrate specificity, and may function toward other RNAs. This chain is RNA-splicing ligase RtcB homolog, found in Xenopus tropicalis (Western clawed frog).